The primary structure comprises 184 residues: ATP synthase subunit b, chloroplastic (184 aa).

Residues 27–49 traverse the membrane as a helical segment; sequence LATNLINLSVVFGVLIFFGKGVL.

This sequence belongs to the ATPase B chain family. As to quaternary structure, F-type ATPases have 2 components, F(1) - the catalytic core - and F(0) - the membrane proton channel. F(1) has five subunits: alpha(3), beta(3), gamma(1), delta(1), epsilon(1). F(0) has four main subunits: a(1), b(1), b'(1) and c(10-14). The alpha and beta chains form an alternating ring which encloses part of the gamma chain. F(1) is attached to F(0) by a central stalk formed by the gamma and epsilon chains, while a peripheral stalk is formed by the delta, b and b' chains.

The protein localises to the plastid. Its subcellular location is the chloroplast thylakoid membrane. In terms of biological role, f(1)F(0) ATP synthase produces ATP from ADP in the presence of a proton or sodium gradient. F-type ATPases consist of two structural domains, F(1) containing the extramembraneous catalytic core and F(0) containing the membrane proton channel, linked together by a central stalk and a peripheral stalk. During catalysis, ATP synthesis in the catalytic domain of F(1) is coupled via a rotary mechanism of the central stalk subunits to proton translocation. Functionally, component of the F(0) channel, it forms part of the peripheral stalk, linking F(1) to F(0). The sequence is that of ATP synthase subunit b, chloroplastic from Aethionema cordifolium (Lebanon stonecress).